The primary structure comprises 273 residues: Putative B3 domain-containing protein At5g58280 (273 aa).

The TF-B3 DNA-binding region spans 127–218 (FVKSMVRSHV…KFKIYVFKGN (92 aa)). Residues 225 to 273 (SARKRGRATTPSEEEEEEEDKDVEESGDEEHSSRATKRSSVRLLRKRKA) are disordered. Over residues 236-252 (SEEEEEEEDKDVEESGD) the composition is skewed to acidic residues. Residues 258–273 (RATKRSSVRLLRKRKA) are compositionally biased toward basic residues.

It is found in the nucleus. This Arabidopsis thaliana (Mouse-ear cress) protein is Putative B3 domain-containing protein At5g58280.